A 786-amino-acid chain; its full sequence is Diamine oxidase [copper-containing] 1, peroxisomal (786 aa).

Residue 419 to 430 coordinates substrate; sequence AFDAGEDGLGKN. The active-site Proton acceptor is aspartate 421. Cysteine 440 and cysteine 466 are disulfide-bonded. 502 to 507 contributes to the substrate binding site; the sequence is VANYEY. Tyrosine 505 (schiff-base intermediate with substrate; via topaquinone) is an active-site residue. Position 505 is a 2',4',5'-topaquinone (tyrosine 505). Residues histidine 555 and histidine 557 each contribute to the Cu cation site. Residues aspartate 710 and isoleucine 711 each contribute to the Mn(2+) site. Histidine 721 is a binding site for Cu cation.

The protein belongs to the copper/topaquinone oxidase family. In terms of assembly, homodimer. The cofactor is Cu cation. Requires Zn(2+) as cofactor. It depends on L-topaquinone as a cofactor. In terms of processing, topaquinone (TPQ) is generated by copper-dependent autoxidation of a specific tyrosyl residue. As to expression, mainly expressed in roots, and, to a lower extent, in leaves and stems.

It is found in the peroxisome. It carries out the reaction a primary methyl amine + O2 + H2O = an aldehyde + H2O2 + NH4(+). The enzyme catalyses N-methylputrescine + O2 + H2O = 4-methylaminobutanal + H2O2 + NH4(+). The protein operates within alkaloid biosynthesis; nicotine biosynthesis. Its pathway is amine and polyamine degradation; putrescine degradation. In terms of biological role, involved in putrescine catabolism in peroxisomes. May also be involved in the biosynthesis of pyridine alkaloid natural products, leading mainly to the production of anabasine, anatabine, nicotine and nornicotine, effective deterrents against herbivores with antiparasitic and pesticide properties (neurotoxins); nornicotine serves as the precursor in the synthesis of the carcinogen compound N'-nitrosonornicotine (NNN). Oxidizes preferentially non-N-methylated amines. This Nicotiana tabacum (Common tobacco) protein is Diamine oxidase [copper-containing] 1, peroxisomal.